The sequence spans 300 residues: B1 kinase (300 aa).

One can recognise a Protein kinase domain in the interval 16 to 282 (WVVGPLIGKG…ITMVNSLTYF (267 aa)). Residues 22–30 (IGKGGFGSI) and K45 contribute to the ATP site. D147 acts as the Proton acceptor in catalysis.

Belongs to the protein kinase superfamily. Ser/Thr protein kinase family. Poxviruses subfamily. In terms of assembly, interacts with host JIP1; this interaction increases the amount of MAPK bound to JIP1 and subsequently increases the activity of transcription factors, such as JUN, that respond to these complexes. Interacts with protein OPG198; this interaction inhibits the repressive activity of OPG198 pseudokinase on viral replication factory formation. Mg(2+) serves as cofactor. Autophosphorylated.

It is found in the virion. The protein resides in the host cytoplasm. It carries out the reaction L-seryl-[protein] + ATP = O-phospho-L-seryl-[protein] + ADP + H(+). The catalysed reaction is L-threonyl-[protein] + ATP = O-phospho-L-threonyl-[protein] + ADP + H(+). In terms of biological role, essential serine/threonine-protein kinase that plays different role in the viral life cycle. Phosphorylates the host small ribosomal protein RACK1 thereby customizing the ribosomes to a state optimal for viral mRNAs (which contain poly-A leaders) but not for host mRNAs. Facilitates viral DNA replication by inhibiting host BANF1, a cellular host defense responsive to foreign DNA. Phosphorylates host BANF1 on serine and threonine residues; this leads to BANF1 relocalization to the cytoplasm, loss of dimerization and impaired DNA binding activity. Indeed, BANF1 activity depends on its DNA-binding property which is blocked by VPK1-mediated phosphorylation. Required for viral intermediate genes expression, probably by inhibiting host BANF1. Modulates cellular responses via host JUN by two different mechanisms, either by direct phosphorylation or by modulation of upstream JIP1-MAPK complexes. Seems to participate in the accumulation/processing of late proteins and thus in virion maturation. In addition, inhibits B12 repressive activity on viral DNA replication via a phosphorylation-dependent mechanism. This is B1 kinase (OPG187) from Vaccinia virus (strain Ankara) (VACV).